The primary structure comprises 502 residues: Sulfate adenylyltransferase (502 aa).

Positions 1-167 are N-terminal; it reads MPSPHGGVLQ…LEAIQLPVHY (167 aa). A catalytic region spans residues 168 to 393; the sequence is DYPGWRKTPA…LRESNPSRPK (226 aa). Position 195 (Q195) interacts with sulfate. ATP contacts are provided by residues 195–198 and 289–292; these read QTRN and GRDH. Catalysis depends on residues T196, R197, and N198. Residue R197 coordinates sulfate. Residue A293 participates in sulfate binding. ATP is bound at residue V331. Residues 394 to 502 are required for oligomerization; adenylyl-sulfate kinase-like; that stretch reads QGFALVLSET…FLEDQGFFQF (109 aa).

The protein belongs to the sulfate adenylyltransferase family. In terms of assembly, homohexamer. Dimer of trimers.

The protein localises to the cytoplasm. It catalyses the reaction sulfate + ATP + H(+) = adenosine 5'-phosphosulfate + diphosphate. It participates in sulfur metabolism; hydrogen sulfide biosynthesis; sulfite from sulfate: step 1/3. Catalyzes the first intracellular reaction of sulfate assimilation, forming adenosine-5'-phosphosulfate (APS) from inorganic sulfate and ATP. Plays an important role in sulfate activation as a component of the biosynthesis pathway of sulfur-containing amino acids. This is Sulfate adenylyltransferase from Kluyveromyces lactis (strain ATCC 8585 / CBS 2359 / DSM 70799 / NBRC 1267 / NRRL Y-1140 / WM37) (Yeast).